The following is a 198-amino-acid chain: FMN-dependent NADH:quinone oxidoreductase (198 aa).

FMN-binding positions include Ser-10, 16–18, 94–97, and 138–141; these read SQS, MYNF, and TRGG.

Belongs to the azoreductase type 1 family. As to quaternary structure, homodimer. Requires FMN as cofactor.

It carries out the reaction 2 a quinone + NADH + H(+) = 2 a 1,4-benzosemiquinone + NAD(+). It catalyses the reaction N,N-dimethyl-1,4-phenylenediamine + anthranilate + 2 NAD(+) = 2-(4-dimethylaminophenyl)diazenylbenzoate + 2 NADH + 2 H(+). Its function is as follows. Quinone reductase that provides resistance to thiol-specific stress caused by electrophilic quinones. Functionally, also exhibits azoreductase activity. Catalyzes the reductive cleavage of the azo bond in aromatic azo compounds to the corresponding amines. The chain is FMN-dependent NADH:quinone oxidoreductase from Shewanella baltica (strain OS195).